The primary structure comprises 213 residues: Thymidylate kinase (213 aa).

Residue 10–17 (GLEGAGKT) participates in ATP binding.

It belongs to the thymidylate kinase family.

The enzyme catalyses dTMP + ATP = dTDP + ADP. Its function is as follows. Phosphorylation of dTMP to form dTDP in both de novo and salvage pathways of dTTP synthesis. This Klebsiella pneumoniae (strain 342) protein is Thymidylate kinase.